A 179-amino-acid chain; its full sequence is Large ribosomal subunit protein uL6 (179 aa).

It belongs to the universal ribosomal protein uL6 family. In terms of assembly, part of the 50S ribosomal subunit.

Its function is as follows. This protein binds to the 23S rRNA, and is important in its secondary structure. It is located near the subunit interface in the base of the L7/L12 stalk, and near the tRNA binding site of the peptidyltransferase center. The polypeptide is Large ribosomal subunit protein uL6 (Persephonella marina (strain DSM 14350 / EX-H1)).